The following is a 156-amino-acid chain: Ribosome maturation factor RimP (156 aa).

Belongs to the RimP family.

The protein resides in the cytoplasm. In terms of biological role, required for maturation of 30S ribosomal subunits. The sequence is that of Ribosome maturation factor RimP from Bacillus cytotoxicus (strain DSM 22905 / CIP 110041 / 391-98 / NVH 391-98).